The chain runs to 1092 residues: Isoleucine--tRNA ligase (1092 aa).

The 'HIGH' region signature appears at 53–63 (PFANGLPHYGH). Residues 613–617 (KLSKR) carry the 'KMSKS' region motif. Lys616 contributes to the ATP binding site.

It belongs to the class-I aminoacyl-tRNA synthetase family. IleS type 2 subfamily. As to quaternary structure, monomer. Zn(2+) serves as cofactor.

It localises to the cytoplasm. The enzyme catalyses tRNA(Ile) + L-isoleucine + ATP = L-isoleucyl-tRNA(Ile) + AMP + diphosphate. In terms of biological role, catalyzes the attachment of isoleucine to tRNA(Ile). As IleRS can inadvertently accommodate and process structurally similar amino acids such as valine, to avoid such errors it has two additional distinct tRNA(Ile)-dependent editing activities. One activity is designated as 'pretransfer' editing and involves the hydrolysis of activated Val-AMP. The other activity is designated 'posttransfer' editing and involves deacylation of mischarged Val-tRNA(Ile). The chain is Isoleucine--tRNA ligase from Rickettsia africae (strain ESF-5).